Consider the following 393-residue polypeptide: MNSSCKTRVFNIISIIMVSMLILSLGAFANNNKAKADSHSKQLEINVKSDKVPQKVKDLAQQQFAGYAKALDKQSNAKTGKYELGEAFKIYKFNGEEDNSYYYPVIKDGKIVYTLTLSPKNKDDLNKSKEDMNYSVKISNFIAKDLDQIKDKNSNITVLTDEKGFYFEEDGKVRLVKATPLANNIKEKESAKTVSPQLKQELKTTVTPTKVEENEAIQEDQVQYENTLKNFKIREQQFDNSWCAGFSMAALLNATKNTDTYNAHDIMRTLYPEVSEQDLPNCATFPNQMIEYGKSQGRDIHYQEGVPSYNQVDQLTKDNVGIMILAQSVSQNPNDPHLGHALAVVGNAKINDQEKLIYWNPWDTELSIQDADSSLLHLSFNRDYNWYGSMIGY.

Residues 1–36 (MNSSCKTRVFNIISIIMVSMLILSLGAFANNNKAKA) form the signal peptide. Positions 37–219 (DSHSKQLEIN…KVEENEAIQE (183 aa)) are excised as a propeptide. Active-site residues include Cys-243, His-340, and Asn-360.

It belongs to the peptidase C47 family. In terms of assembly, in the cytoplasm, prematurely activated/folded SspB forms a stable non-covalent complex with SspC. Proteolytically cleaved by staphylococcal serine protease (SspA).

The protein resides in the secreted. Prematurely activated/folded staphopain B is inhibited by staphostatin B (SspC), which is probably required to protect staphylococcal cytoplasmic proteins from degradation by SspB. In terms of biological role, cysteine protease that plays an important role in the inhibition of host innate immune response. Degrades host elastin, fibrogen, fibronectin and kininogen. Blocks phagocytosis of opsonised S.aureus by neutrophils and monocytes by inducing their death in a proteolytic activity-dependent manner. Decreases surface expression of the 'don't eat me' signal CD31 on neutrophils. Cleaves host galectin-3/LGALS3, thereby inhibiting the neutrophil-activating ability of the lectin. The sequence is that of Staphopain B (sspB) from Staphylococcus aureus.